A 245-amino-acid chain; its full sequence is Geranylgeranylglyceryl phosphate synthase (245 aa).

2 residues coordinate Mg(2+): Asp22 and Ser51. Residues 169-175 (YLEAGSG), 200-201 (GG), and 222-223 (GT) contribute to the sn-glycerol 1-phosphate site.

The protein belongs to the GGGP/HepGP synthase family. Group II subfamily. In terms of assembly, homopentamer. Requires Mg(2+) as cofactor.

The protein localises to the cytoplasm. The enzyme catalyses sn-glycerol 1-phosphate + (2E,6E,10E)-geranylgeranyl diphosphate = sn-3-O-(geranylgeranyl)glycerol 1-phosphate + diphosphate. Its pathway is membrane lipid metabolism; glycerophospholipid metabolism. With respect to regulation, inhibited by EDTA in vitro. Prenyltransferase that catalyzes the transfer of the geranylgeranyl moiety of geranylgeranyl diphosphate (GGPP) to the C3 hydroxyl of sn-glycerol-1-phosphate (G1P). This reaction is the first ether-bond-formation step in the biosynthesis of archaeal membrane lipids. Cannot use sn-glycerol-3-phosphate (G3P) or dihydroxyacetonephosphate (DHAP) as substrate. In Methanothermobacter marburgensis (strain ATCC BAA-927 / DSM 2133 / JCM 14651 / NBRC 100331 / OCM 82 / Marburg) (Methanobacterium thermoautotrophicum), this protein is Geranylgeranylglyceryl phosphate synthase.